The chain runs to 380 residues: Selenoprotein P (380 aa).

The N-terminal stretch at 1 to 19 (MWRSLGLALALCLLPYGGA) is a signal peptide. Position 59 (Sec-59) is a non-standard amino acid, selenocysteine. Residues Asn-83, Asn-176, and Asn-195 are each glycosylated (N-linked (GlcNAc...) asparagine). The disordered stretch occupies residues 196–257 (KTAEPSEAHS…RGQHRQGHLE (62 aa)). The span at 221-237 (SKPSENQQPGPSETTLP) shows a compositional bias: polar residues. The span at 241–253 (LHHHHRHRGQHRQ) shows a compositional bias: basic residues. Residue Sec-259 is a non-standard amino acid, selenocysteine. Ser-264 carries the phosphoserine modification. 4 non-standard amino acids (selenocysteine) are found at residues Sec-277, Sec-318, Sec-330, and Sec-352. A disordered region spans residues 346–380 (RSPPAAUQNQPMNPMEANPNUSUDNQTRKUKUHSN). Over residues 348-360 (PPAAUQNQPMNPM) the composition is skewed to low complexity. The N-linked (GlcNAc...) asparagine glycan is linked to Asn-365. Non-standard amino acids (selenocysteine) are located at Sec-366 and Sec-368. Residue Asn-370 is glycosylated (N-linked (GlcNAc...) asparagine). Residues Sec-375 and Sec-377 are each a non-standard amino acid (selenocysteine).

Belongs to the selenoprotein P family. Post-translationally, phosphorylation sites are present in the extracellular medium. As to expression, in the kidney, expressed in the cortex with no expression observed in the medulla (at protein level). Expressed by the liver and secreted in plasma.

It localises to the secreted. In terms of biological role, might be responsible for some of the extracellular antioxidant defense properties of selenium or might be involved in the transport of selenium. May supply selenium to tissues such as brain and testis. The polypeptide is Selenoprotein P (Mus musculus (Mouse)).